Reading from the N-terminus, the 579-residue chain is Vacuolar protein 8 (579 aa).

The N-myristoyl glycine moiety is linked to residue Gly2. 3 S-palmitoyl cysteine lipidation sites follow: Cys4, Cys5, and Cys7. ARM repeat units lie at residues 39 to 76 (NKDQ…FAEI), 77 to 116 (TEKY…NLAV), 118 to 157 (NENK…NLAT), 159 to 198 (DDNK…NMTH), 200 to 239 (GENR…NIAV), 241 to 282 (ESNR…NLAS), 284 to 323 (TNYQ…NISI), 325 to 365 (PLNE…NLAA), and 409 to 448 (DNTK…NLIS). Polar residues predominate over residues 534–556 (QDTNIDHNGNSNNIEGNGRSNKQ). The tract at residues 534-560 (QDTNIDHNGNSNNIEGNGRSNKQSSEK) is disordered.

The protein belongs to the beta-catenin family.

Its subcellular location is the vacuole membrane. Functions in both vacuole inheritance and protein targeting from the cytoplasm to vacuole. The protein is Vacuolar protein 8 (VAC8) of Kluyveromyces lactis (strain ATCC 8585 / CBS 2359 / DSM 70799 / NBRC 1267 / NRRL Y-1140 / WM37) (Yeast).